The primary structure comprises 383 residues: Phosphoenolpyruvate/phosphate translocator 2, chloroplastic (383 aa).

Residues 1–55 (MFALTFLNPNPRLPSPLFLAKSTPESALSRRSRAFSSSNSYPWRPNLRFNGFKLK) constitute a chloroplast transit peptide. The next 8 membrane-spanning stretches (helical) occupy residues 76 to 96 (GLKL…YNIF), 108 to 128 (ATVT…MWLL), 143 to 163 (VIVQ…VSLG), 179 to 199 (FFTV…WIVC), 210 to 232 (LASF…SNVT), 253 to 273 (INLF…LAIL), 299 to 319 (IMSL…YMIL), and 350 to 369 (VSPL…YLYS). An EamA domain is found at 93 to 212 (YNIFNKQVLR…PIVAGVSLAS (120 aa)).

Belongs to the TPT transporter family. PPT (TC 2.A.7.9) subfamily. Widely expressed in leaves throughout development. In flowers, expressed in sepals and pistils.

It is found in the plastid. The protein localises to the chloroplast membrane. Its function is as follows. Phosphoenolpyruvate/phosphate translocator that transports phosphoenolpyruvate (PEP), 2-phosphoglycerate and 3-phosphoglycerate. This Arabidopsis thaliana (Mouse-ear cress) protein is Phosphoenolpyruvate/phosphate translocator 2, chloroplastic (PPT2).